The sequence spans 423 residues: MSERTVTVSQLTNYLKNLLLQDHNLKNVLVRGEISNFKHHSSGHMYFTLKDEGASLRCVMFRNRNWNLDFSPQDGMDVIVQGVVGIFERAGLYQLYVEKMYSHGLGSLHLAFEQLKEKLAEEGIFNEEYKKTLPPFPKKIAVVTSPTGAAVRDMIVTISRRFPLTSILLIPVRVQGEYAASEIRAGIDYANSIDDIDVILVGRGGGSLEEIWPFNTEEVARAIFSSKAPVISCVGHETDFTISDFVSDLRAPTPTAAAELVVPDQVELKRQVSDYKHRLTKALYHKYRNLDQRVVELLDRPVMKNPYTLISERKKELEYLDQRLLREVYHLFKLKRNKYSSLVEQLDSLSPLKTLGRGYTFCQTHDGDIVRSVTDIEQEDILKLTFFDGSAKCLVKEKQEHHISEDHSNLNSLCNEEEDYDRQ.

It belongs to the XseA family. In terms of assembly, heterooligomer composed of large and small subunits.

It localises to the cytoplasm. It carries out the reaction Exonucleolytic cleavage in either 5'- to 3'- or 3'- to 5'-direction to yield nucleoside 5'-phosphates.. In terms of biological role, bidirectionally degrades single-stranded DNA into large acid-insoluble oligonucleotides, which are then degraded further into small acid-soluble oligonucleotides. The chain is Exodeoxyribonuclease 7 large subunit from Natranaerobius thermophilus (strain ATCC BAA-1301 / DSM 18059 / JW/NM-WN-LF).